A 311-amino-acid polypeptide reads, in one-letter code: Aldose reductase B (311 aa).

D13–G23 contacts NADP(+). Y54 (proton donor) is an active-site residue. H116 serves as a coordination point for substrate. S219 to N273 provides a ligand contact to NADP(+).

The protein belongs to the aldo/keto reductase family.

The enzyme catalyses an alditol + NAD(+) = an aldose + NADH + H(+). The catalysed reaction is an alditol + NADP(+) = an aldose + NADPH + H(+). In terms of biological role, catalyzes the NADPH-dependent reduction of a wide variety of carbonyl-containing compounds to their corresponding alcohols with a broad range of catalytic efficiencies. The polypeptide is Aldose reductase B (alrB) (Dictyostelium discoideum (Social amoeba)).